We begin with the raw amino-acid sequence, 310 residues long: Signal peptidase I (310 aa).

A helical membrane pass occupies residues Leu-5–Ile-25. The Cytoplasmic segment spans residues Leu-26–Ser-57. A helical transmembrane segment spans residues Phe-58–Ile-78. Topologically, residues Pro-79–Tyr-310 are extracellular. Catalysis depends on residues Ser-82 and Lys-137.

Belongs to the peptidase S26 family.

It localises to the cell membrane. It carries out the reaction Cleavage of hydrophobic, N-terminal signal or leader sequences from secreted and periplasmic proteins.. The chain is Signal peptidase I (lepB) from Buchnera aphidicola subsp. Baizongia pistaciae (strain Bp).